A 1686-amino-acid polypeptide reads, in one-letter code: A disintegrin and metalloproteinase with thrombospondin motifs 7 (1686 aa).

Positions 1–27 (MPGGPSPRSPAPLLRPLLLLLCALAPG) are cleaved as a signal peptide. Positions 28 to 236 (APGPAPGRAT…RPRLRRLHQR (209 aa)) are excised as a propeptide. The N-linked (GlcNAc...) asparagine glycan is linked to Asn-94. The short motif at 202–209 (STCGVQVY) is the Cysteine switch element. A Zn(2+)-binding site is contributed by Cys-204. Residues 242 to 452 (KWVETLVVAD…GWGLCLDDPP (211 aa)) enclose the Peptidase M12B domain. 11 disulfide bridges follow: Cys-318–Cys-372, Cys-347–Cys-354, Cys-366–Cys-447, Cys-405–Cys-431, Cys-474–Cys-497, Cys-485–Cys-503, Cys-492–Cys-522, Cys-516–Cys-527, Cys-550–Cys-587, Cys-554–Cys-592, and Cys-565–Cys-577. His-388 provides a ligand contact to Zn(2+). The active site involves Glu-389. The Zn(2+) site is built by His-392 and His-398. A Disintegrin domain is found at 462-537 (VPPGVLYDVS…VPVGFRPEAV (76 aa)). A TSP type-1 1 domain is found at 538 to 593 (DGGWSGWSAWSICSRSCGMGVQSAERQCTQPTPKYKGRYCVGERKRFRLCNLQACP). N-linked (GlcNAc...) asparagine glycosylation is found at Asn-693 and Asn-778. The spacer stretch occupies residues 698-809 (HTVSGTFEEA…PGVHYEYTIH (112 aa)). 3 TSP type-1 domains span residues 821–880 (PVFS…QPCP), 881–940 (ARWW…NRHV), and 942–995 (CPAT…PLCR). 3 disordered regions span residues 1024-1043 (HHLAPRPSPASSPKPGTMGN), 1080-1257 (PSEE…SPDV), and 1344-1396 (LGHM…PLAP). A compositionally biased stretch (polar residues) spans 1182–1205 (DGLQTPATPESQNDFPVGKDSQSQ). The segment covering 1210 to 1226 (WRDRTNEVFKDDEEPKG) has biased composition (basic and acidic residues). Positions 1360–1375 (PESLSPEVPLSSRLLS) are enriched in low complexity. TSP type-1 domains are found at residues 1411–1459 (RNAG…RRCH), 1462–1522 (PCAT…QPCL), 1523–1567 (SWYT…PCNT), and 1569–1629 (PCTQ…EDCE). Residues 1632-1672 (EPPRCERDRLSFGFCETLRLLGRCQLPTIRTQCCRSCSPPS) enclose the PLAC domain. A disordered region spans residues 1666–1686 (RSCSPPSHGAPSRGHQRVARR).

As to quaternary structure, interacts with COMP. Zn(2+) serves as cofactor. N-glycosylated. Can be O-fucosylated by POFUT2 on a serine or a threonine residue found within the consensus sequence C1-X(2)-(S/T)-C2-G of the TSP type-1 repeat domains where C1 and C2 are the first and second cysteine residue of the repeat, respectively. Fucosylated repeats can then be further glycosylated by the addition of a beta-1,3-glucose residue by the glucosyltransferase, B3GALTL. Fucosylation mediates the efficient secretion of ADAMTS family members. Can also be C-glycosylated with one or two mannose molecules on tryptophan residues within the consensus sequence W-X-X-W of the TPRs. N- and C-glycosylations can also facilitate secretion. Post-translationally, O-glycosylated proteoglycan; contains chondroitin sulfate. In terms of processing, may be cleaved by a furin endopeptidase. The precursor is sequentially processed. Expressed in heart, brain, placenta, lung, liver, skeletal muscle, kidney and pancreas. Detected in meniscus, bone, tendon, cartilage, synovium, fat and ligaments.

It localises to the secreted. Its subcellular location is the extracellular space. The protein resides in the extracellular matrix. In terms of biological role, metalloprotease. Was previously shown to degrade COMP. However, a later study found no activity against COMP. The chain is A disintegrin and metalloproteinase with thrombospondin motifs 7 (ADAMTS7) from Homo sapiens (Human).